A 24-amino-acid polypeptide reads, in one-letter code: Calcium-binding shell glycoprotein P50 (24 aa).

Positions 1 to 24 (KDALEHTGFAPKKDGEEHVEWNYN) are disordered.

Post-translationally, glycosylated. In terms of tissue distribution, nacreous and prismatic layers of the shell.

Functionally, calcium-binding. This Unio pictorum (Painter's mussel) protein is Calcium-binding shell glycoprotein P50.